A 367-amino-acid chain; its full sequence is MISSLHRPTLAKVDLSAISENIEQVVSHIPKQVQTFAVVKANAYGHGAVEVAKHVSKQVDGFCVSNLDEALELRQAGIEQPILILGVVLPDGVPLAIQENISLTVASLEWLALAQKQGLDLTGLTCHIKVDSGMGRIGVRNLKDADNLIAGLKALGADVEGIFTHFATADEADDSKFKRQLSFFTDLVDNLTARPRLVHASNSATSIWHATTVFNTVRLGVVIYGLNPSGSVLELPYNIQPALSLETALIHVKTLPAGQEVGYGATYTTTAEEVIGTLPIGYADGWTRDLQGFHVIVDGQLCPIVGRVSMDQITVRLPKVYPLGTPVTLMGENGGASITATEVAEKRGTINYEVLCLLSDRVPRSYD.

Lys40 (proton acceptor; specific for D-alanine) is an active-site residue. Lys40 carries the N6-(pyridoxal phosphate)lysine modification. Arg136 contributes to the substrate binding site. The active-site Proton acceptor; specific for L-alanine is the Tyr263. A substrate-binding site is contributed by Met310.

It belongs to the alanine racemase family. Pyridoxal 5'-phosphate is required as a cofactor.

The catalysed reaction is L-alanine = D-alanine. The protein operates within amino-acid biosynthesis; D-alanine biosynthesis; D-alanine from L-alanine: step 1/1. In terms of biological role, catalyzes the interconversion of L-alanine and D-alanine. May also act on other amino acids. The polypeptide is Alanine racemase (alr) (Streptococcus thermophilus (strain CNRZ 1066)).